The sequence spans 271 residues: MKRYVFMLSDGTGITAETLGNSLITQFENIQFEKITIPYIDSTHRAESVVLRINQCFSEQGTKPLVFMTLVDPEIRQAIKKAHACVFDLFSIFIGPLENELEEKSSYTVGRTHGVANVKSYSHRIEAIDFALSHDDGIKTRGYDKADIILIGVSRCGKTPSCLYMALQYGILAANYPFTEEDLVGFRLPDVLRPYKQKLFGLTIDAQRLQQIRSERRPNSKYASAEQCRLEVTEVEAMYQRENIPYINSTKYSIEEISTKVLAIAGLQRKI.

152 to 159 (GVSRCGKT) provides a ligand contact to ADP.

The protein belongs to the pyruvate, phosphate/water dikinase regulatory protein family. PSRP subfamily.

The enzyme catalyses [pyruvate, water dikinase] + ADP = [pyruvate, water dikinase]-phosphate + AMP + H(+). It catalyses the reaction [pyruvate, water dikinase]-phosphate + phosphate + H(+) = [pyruvate, water dikinase] + diphosphate. Its function is as follows. Bifunctional serine/threonine kinase and phosphorylase involved in the regulation of the phosphoenolpyruvate synthase (PEPS) by catalyzing its phosphorylation/dephosphorylation. The sequence is that of Putative phosphoenolpyruvate synthase regulatory protein from Legionella pneumophila (strain Lens).